Consider the following 132-residue polypeptide: MARILGVDIPNDKRVVISLTYIFGIGKSTSQQILKLANIDENIRVKDLADEQIAEIRRVALNFVKANGEKLQLEGDLRRTVAMDIKRLMEIGSYRGIRHRRGLPVRGQRTKTNARTRKGPRKTVANKKIETR.

The span at 101-125 (RGLPVRGQRTKTNARTRKGPRKTVA) shows a compositional bias: basic residues. The tract at residues 101-132 (RGLPVRGQRTKTNARTRKGPRKTVANKKIETR) is disordered.

This sequence belongs to the universal ribosomal protein uS13 family. Part of the 30S ribosomal subunit. Forms a loose heterodimer with protein S19. Forms two bridges to the 50S subunit in the 70S ribosome.

In terms of biological role, located at the top of the head of the 30S subunit, it contacts several helices of the 16S rRNA. In the 70S ribosome it contacts the 23S rRNA (bridge B1a) and protein L5 of the 50S subunit (bridge B1b), connecting the 2 subunits; these bridges are implicated in subunit movement. Contacts the tRNAs in the A and P-sites. The sequence is that of Small ribosomal subunit protein uS13 from Ureaplasma parvum serovar 3 (strain ATCC 27815 / 27 / NCTC 11736).